Reading from the N-terminus, the 163-residue chain is Neurotrophin-3 (163 aa).

Residues 1-3 form the signal peptide; the sequence is IQS. The propeptide occupies 4–119; sequence TSMDQGILTE…VLNRTSRRKR (116 aa). A glycan (N-linked (GlcNAc...) asparagine) is linked at Asn-112.

Belongs to the NGF-beta family.

It localises to the secreted. In terms of biological role, seems to promote the survival of visceral and proprioceptive sensory neurons. This is Neurotrophin-3 (NTF3) from Eryx colubrinus colubrinus.